The chain runs to 36 residues: Photosystem I reaction center subunit VIII (36 aa).

Residues 8–28 traverse the membrane as a helical segment; that stretch reads SVLVPLVGLVFPAIAMASLFL.

Belongs to the PsaI family.

It localises to the plastid. Its subcellular location is the chloroplast thylakoid membrane. Functionally, may help in the organization of the PsaL subunit. The protein is Photosystem I reaction center subunit VIII of Helianthus annuus (Common sunflower).